A 183-amino-acid chain; its full sequence is uncharacterized protein (183 aa).

This is an uncharacterized protein from Shigella flexneri.